The primary structure comprises 166 residues: Large ribosomal subunit protein bL9 (166 aa).

It belongs to the bacterial ribosomal protein bL9 family.

In terms of biological role, binds to the 23S rRNA. The polypeptide is Large ribosomal subunit protein bL9 (Psychrobacter arcticus (strain DSM 17307 / VKM B-2377 / 273-4)).